We begin with the raw amino-acid sequence, 58 residues long: uncharacterized protein (58 aa).

Its subcellular location is the plastid. The protein localises to the chloroplast. This is an uncharacterized protein from Porphyra purpurea (Red seaweed).